The chain runs to 718 residues: MSNESKCPFSGHNSKPQVTVGGGTANLHWWPNQLRVDLLNQHSERSNPLGKDFNYRQEFKKLDYYALKADIKNVLTDSQDWWPADWGNYTGLFIRLAWHAAGTYRMGDGRGGAGRGQQRFAPLNSWPDNASLDKARRLLWPVKQKYGQKISWADLFILAGNIALESSGFRTFGFGAGREDVWEPDNDVNWGDEKEWLAHRNSEALAGSNLAATEMGLIYVNPEGPQASGDPRSAAPFIRATFGNMAMDDEEIVALIAGGHTLGKTHGAASADHVQADPEGAPIEQMGFGWANSYGTGVGKDAITSGLEVIWSQTPTQWSNYFFENLFKYEWVQERSPAGAIQWVAADAEAIIPDPFDPSIKRKPTMLTTDLTLRFDPEFEKISRRFLNDPQAFANAFARAWFKLTHRDMGPKARYLGPEVPAEDLIWQDPLPAASATPSSASIADAKAKIVALGLSTGELVSLAWASASTFRGGDKRGGANGARIALSPQREWEVNKKAVETLTKIEELKASTQLSLADLIVLAGNVGVEQAAQAAGFNITVPFAPGRVDALQSQTDVESFQLLLGLADGFRNWKKQGVNTPAEVLLIDKAQQLTLTAPELTALIGGLRVLGTNWDGSQHGVFTQQVGVLSTDFFTNLLDMSNVWAPVDSTSEVFEGKDRKSGTVKFTATRNDLVFGSNSILRALAEVYAQADGKEKFVQDFVAAWTKVMNLDRFDLA.

A cross-link (tryptophyl-tyrosyl-methioninium (Trp-Tyr) (with M-245)) is located at residues 98 to 219; the sequence is WHAAGTYRMG…LAATEMGLIY (122 aa). The active-site Proton acceptor is H99. Residues 219-245 constitute a cross-link (tryptophyl-tyrosyl-methioninium (Tyr-Met) (with W-98)); the sequence is YVNPEGPQASGDPRSAAPFIRATFGNM. Residue H260 coordinates heme b.

It belongs to the peroxidase family. Peroxidase/catalase subfamily. In terms of assembly, homodimer or homotetramer. Requires heme b as cofactor. Formation of the three residue Trp-Tyr-Met cross-link is important for the catalase, but not the peroxidase activity of the enzyme.

The catalysed reaction is H2O2 + AH2 = A + 2 H2O. The enzyme catalyses 2 H2O2 = O2 + 2 H2O. Bifunctional enzyme with both catalase and broad-spectrum peroxidase activity. This chain is Catalase-peroxidase, found in Acinetobacter baumannii (strain ACICU).